We begin with the raw amino-acid sequence, 175 residues long: Ribosome maturation factor RimM (175 aa).

The region spanning 100–173 (EGEYYFHEII…TIIIRPMEGL (74 aa)) is the PRC barrel domain.

This sequence belongs to the RimM family. Binds ribosomal protein uS19.

Its subcellular location is the cytoplasm. Functionally, an accessory protein needed during the final step in the assembly of 30S ribosomal subunit, possibly for assembly of the head region. Essential for efficient processing of 16S rRNA. May be needed both before and after RbfA during the maturation of 16S rRNA. It has affinity for free ribosomal 30S subunits but not for 70S ribosomes. The polypeptide is Ribosome maturation factor RimM (Geobacillus kaustophilus (strain HTA426)).